Here is a 513-residue protein sequence, read N- to C-terminus: ATP synthase subunit alpha (513 aa).

An ATP-binding site is contributed by 169–176 (GDRQTGKS).

It belongs to the ATPase alpha/beta chains family. In terms of assembly, F-type ATPases have 2 components, CF(1) - the catalytic core - and CF(0) - the membrane proton channel. CF(1) has five subunits: alpha(3), beta(3), gamma(1), delta(1), epsilon(1). CF(0) has three main subunits: a(1), b(2) and c(9-12). The alpha and beta chains form an alternating ring which encloses part of the gamma chain. CF(1) is attached to CF(0) by a central stalk formed by the gamma and epsilon chains, while a peripheral stalk is formed by the delta and b chains.

Its subcellular location is the cell inner membrane. The enzyme catalyses ATP + H2O + 4 H(+)(in) = ADP + phosphate + 5 H(+)(out). Its function is as follows. Produces ATP from ADP in the presence of a proton gradient across the membrane. The alpha chain is a regulatory subunit. The protein is ATP synthase subunit alpha of Blochmanniella floridana.